Reading from the N-terminus, the 85-residue chain is Protein Vpu (85 aa).

The Extracellular portion of the chain corresponds to 1-7 (MHQENLL). A helical membrane pass occupies residues 8–28 (ALIALSALCLINVLIWLFNLR). The Cytoplasmic portion of the chain corresponds to 29–85 (IYLVQRKQDRREQEILERLRRIKEIRDDSDYESNEEEQQEVMELIHSHGFANPMFEL).

The protein belongs to the HIV-1 VPU protein family. Homopentamer. Interacts with host CD4 and BRTC; these interactions induce proteasomal degradation of CD4. Interacts with host BST2; this interaction leads to the degradation of host BST2. Interacts with host FBXW11. Interacts with host AP1M1; this interaction plays a role in the mistrafficking and subsequent degradation of host BST2. Interacts with host RANBP2; this interaction allows Vpu to down-regulate host BLM sumoylation. In terms of processing, phosphorylated by host CK2. This phosphorylation is necessary for interaction with human BTRC and degradation of CD4.

The protein resides in the host membrane. With respect to regulation, ion channel activity is inhibited by hexamethylene amiloride in vitro. Its function is as follows. Enhances virion budding by targeting host CD4 and Tetherin/BST2 to proteasome degradation. Degradation of CD4 prevents any unwanted premature interactions between viral Env and its host receptor CD4 in the endoplasmic reticulum. Degradation of antiretroviral protein Tetherin/BST2 is important for virion budding, as BST2 tethers new viral particles to the host cell membrane. Mechanistically, Vpu bridges either CD4 or BST2 to BTRC, a substrate recognition subunit of the Skp1/Cullin/F-box protein E3 ubiquitin ligase, induces their ubiquitination and subsequent proteasomal degradation. The alteration of the E3 ligase specificity by Vpu seems to promote the degradation of host IKBKB, leading to NF-kappa-B down-regulation and subsequent apoptosis. Acts as a viroporin that forms an oligomeric ion channel in membranes. Modulates the host DNA repair mechanisms to promote degradation of nuclear viral cDNA in cells that are already productively infected in order to suppress immune sensing and proviral hyper-integration (superinfection). Manipulates PML-NBs and modulates SUMOylation of host BLM protein thereby enhancing its DNA-end processing activity toward viral unintegrated linear DNA. Also inhibits RAD52-mediated homologous repair of viral cDNA, preventing the generation of dead-end circular forms of single copies of the long terminal repeat and permitting sustained nucleolytic attack. This is Protein Vpu from Human immunodeficiency virus type 1 group O (isolate MVP5180) (HIV-1).